We begin with the raw amino-acid sequence, 377 residues long: MNAISSTSAVQTVHVPLGERAYDILIGPGLIARAGTEIASRLKGRKAAIITDENVAPLYLDALVASLDAAGIVSAEVVLPAGEKTKSFEHLITVCDKVLEARVERNDCVIALGGGVIGDLSGFAAGIVRRGVRFVQVPTSLLSQVDSSVGGKTGINSPRHGKNLIGVFHQPDLVLADTDVLNTLSEREFRAGYAEVAKYGLIDKPDFFTWLEANWRSVFTGGSARIEAIAASCQAKADVVVADERENGQRALLNLGHTFGHALEAATAYDSRRLVHGEGVSIGMVLAHEFSARMNLASPDDARRVERHLREVGLPTRMSEIAGELPPAEVLMEAIAQDKKVKSGKLTFILTRGIGQSFVADDVPASEVLSFLREKHP.

NAD(+) contacts are provided by residues 115–119 (GVIGD), 139–140 (TS), K152, and K162. Zn(2+)-binding residues include E195, H257, and H276.

This sequence belongs to the sugar phosphate cyclases superfamily. Dehydroquinate synthase family. Co(2+) serves as cofactor. Zn(2+) is required as a cofactor. It depends on NAD(+) as a cofactor.

The protein localises to the cytoplasm. The enzyme catalyses 7-phospho-2-dehydro-3-deoxy-D-arabino-heptonate = 3-dehydroquinate + phosphate. The protein operates within metabolic intermediate biosynthesis; chorismate biosynthesis; chorismate from D-erythrose 4-phosphate and phosphoenolpyruvate: step 2/7. In terms of biological role, catalyzes the conversion of 3-deoxy-D-arabino-heptulosonate 7-phosphate (DAHP) to dehydroquinate (DHQ). This Rhizobium etli (strain ATCC 51251 / DSM 11541 / JCM 21823 / NBRC 15573 / CFN 42) protein is 3-dehydroquinate synthase.